A 505-amino-acid chain; its full sequence is N-succinylglutamate 5-semialdehyde dehydrogenase (505 aa).

Residue 234 to 239 (GSAHTG) participates in NAD(+) binding. Residues glutamate 257 and cysteine 291 contribute to the active site.

The protein belongs to the aldehyde dehydrogenase family. AstD subfamily.

It catalyses the reaction N-succinyl-L-glutamate 5-semialdehyde + NAD(+) + H2O = N-succinyl-L-glutamate + NADH + 2 H(+). Its pathway is amino-acid degradation; L-arginine degradation via AST pathway; L-glutamate and succinate from L-arginine: step 4/5. Its function is as follows. Catalyzes the NAD-dependent reduction of succinylglutamate semialdehyde into succinylglutamate. This chain is N-succinylglutamate 5-semialdehyde dehydrogenase, found in Yersinia pestis (strain Pestoides F).